A 521-amino-acid polypeptide reads, in one-letter code: Bifunctional purine biosynthesis protein PurH (521 aa).

One can recognise an MGS-like domain in the interval 1 to 145 (MIKQALISVS…KNHRDVTVVV (145 aa)).

The protein belongs to the PurH family.

The enzyme catalyses (6R)-10-formyltetrahydrofolate + 5-amino-1-(5-phospho-beta-D-ribosyl)imidazole-4-carboxamide = 5-formamido-1-(5-phospho-D-ribosyl)imidazole-4-carboxamide + (6S)-5,6,7,8-tetrahydrofolate. The catalysed reaction is IMP + H2O = 5-formamido-1-(5-phospho-D-ribosyl)imidazole-4-carboxamide. Its pathway is purine metabolism; IMP biosynthesis via de novo pathway; 5-formamido-1-(5-phospho-D-ribosyl)imidazole-4-carboxamide from 5-amino-1-(5-phospho-D-ribosyl)imidazole-4-carboxamide (10-formyl THF route): step 1/1. It functions in the pathway purine metabolism; IMP biosynthesis via de novo pathway; IMP from 5-formamido-1-(5-phospho-D-ribosyl)imidazole-4-carboxamide: step 1/1. The sequence is that of Bifunctional purine biosynthesis protein PurH from Burkholderia pseudomallei (strain 1106a).